The chain runs to 585 residues: GRR1-like protein 1 (585 aa).

The F-box domain maps to 1-48 (MGLRFPPKVLEHILSFIDSNEDRNSVSLVCKSWFETERKTRKRVFVGN). Residue Lys70 participates in 1D-myo-inositol hexakisphosphate binding. The interval 77–78 (DY) is interaction with auxin-responsive proteins. 1D-myo-inositol hexakisphosphate is bound by residues 109–110 (KR) and Arg340. Residues 343 to 348 (PSEPDL) form an interaction with auxin-responsive proteins region. Residue 397–399 (CFR) coordinates 1D-myo-inositol hexakisphosphate. Residues 401-405 (CVIEP) are interaction with auxin-responsive proteins. Arg432 serves as a coordination point for 1D-myo-inositol hexakisphosphate. Residues 460–461 (AF) form an interaction with auxin-responsive proteins region. 1D-myo-inositol hexakisphosphate contacts are provided by residues 480-481 (KK) and Arg505.

In terms of assembly, part of a SCF (SKP1-cullin-F-box) protein ligase complex. Interacts with CUL1, SKP1A/ASK1 and SKP1B/ASK2. Interacts with Aux/IAA proteins (IAA7 and IAA12) in an auxin-dependent manner. Ubiquitous.

The protein localises to the nucleus. Its pathway is protein modification; protein ubiquitination. In terms of biological role, component of SCF(ASK-cullin-F-box) E3 ubiquitin ligase complexes, which may mediate the ubiquitination and subsequent proteasomal degradation of target proteins. Auxin receptor that mediates Aux/IAA proteins proteasomal degradation and auxin-regulated transcription. Involved in embryogenesis regulation by auxin. Confers sensitivity to the virulent bacterial pathogen P.syringae. Mediates glucose repression in yeast. The sequence is that of GRR1-like protein 1 (GRH1) from Arabidopsis thaliana (Mouse-ear cress).